We begin with the raw amino-acid sequence, 156 residues long: CKLF-like MARVEL transmembrane domain-containing protein 5 (156 aa).

One can recognise an MARVEL domain in the interval 29 to 146 (FLSSLKGILL…DAFKIYRTEL (118 aa)). A run of 4 helical transmembrane segments spans residues 35-55 (GILLETELALTFIIFICFTAS), 56-76 (ISAYMAAALLEFLITLAFLFL), 93-113 (LDFLRCLSAIVIFLVVSFAAV), and 119-139 (AAIAAFVFGIILVSVFAYDAF).

This sequence belongs to the chemokine-like factor family.

The protein resides in the membrane. The protein is CKLF-like MARVEL transmembrane domain-containing protein 5 (Cmtm5) of Mus musculus (Mouse).